The primary structure comprises 248 residues: Ubiquinone/menaquinone biosynthesis C-methyltransferase UbiE (248 aa).

Ser68 and Asp92 together coordinate S-adenosyl-L-methionine.

It belongs to the class I-like SAM-binding methyltransferase superfamily. MenG/UbiE family.

The enzyme catalyses a 2-demethylmenaquinol + S-adenosyl-L-methionine = a menaquinol + S-adenosyl-L-homocysteine + H(+). The catalysed reaction is a 2-methoxy-6-(all-trans-polyprenyl)benzene-1,4-diol + S-adenosyl-L-methionine = a 5-methoxy-2-methyl-3-(all-trans-polyprenyl)benzene-1,4-diol + S-adenosyl-L-homocysteine + H(+). It participates in quinol/quinone metabolism; menaquinone biosynthesis; menaquinol from 1,4-dihydroxy-2-naphthoate: step 2/2. Its pathway is cofactor biosynthesis; ubiquinone biosynthesis. In terms of biological role, methyltransferase required for the conversion of demethylmenaquinol (DMKH2) to menaquinol (MKH2) and the conversion of 2-polyprenyl-6-methoxy-1,4-benzoquinol (DDMQH2) to 2-polyprenyl-3-methyl-6-methoxy-1,4-benzoquinol (DMQH2). The sequence is that of Ubiquinone/menaquinone biosynthesis C-methyltransferase UbiE from Rickettsia peacockii (strain Rustic).